The following is a 133-amino-acid chain: Small ribosomal subunit protein bS6 (133 aa).

It belongs to the bacterial ribosomal protein bS6 family.

Binds together with bS18 to 16S ribosomal RNA. The sequence is that of Small ribosomal subunit protein bS6 from Chlorobium luteolum (strain DSM 273 / BCRC 81028 / 2530) (Pelodictyon luteolum).